The sequence spans 343 residues: GTPase Obg (343 aa).

The 159-residue stretch at 1–159 (MQFIDHATIC…RQLRLELKLL (159 aa)) folds into the Obg domain. The OBG-type G domain maps to 160 to 328 (AEVGLIGLPN…LLRLVWQWLD (169 aa)). GTP contacts are provided by residues 166–173 (GLPNAGKS), 191–195 (FTTLV), 213–216 (DIPG), 280–283 (NKID), and 309–311 (SSA). Mg(2+) contacts are provided by Ser-173 and Thr-193.

Belongs to the TRAFAC class OBG-HflX-like GTPase superfamily. OBG GTPase family. Monomer. Mg(2+) serves as cofactor.

It is found in the cytoplasm. Its function is as follows. An essential GTPase which binds GTP, GDP and possibly (p)ppGpp with moderate affinity, with high nucleotide exchange rates and a fairly low GTP hydrolysis rate. Plays a role in control of the cell cycle, stress response, ribosome biogenesis and in those bacteria that undergo differentiation, in morphogenesis control. This is GTPase Obg from Synechococcus elongatus (strain ATCC 33912 / PCC 7942 / FACHB-805) (Anacystis nidulans R2).